A 563-amino-acid polypeptide reads, in one-letter code: Coiled-coil domain-containing protein 38 (563 aa).

A coiled-coil region spans residues Thr128–Glu211. A disordered region spans residues Asp265–Ser310. Positions Asp269–Ser281 are enriched in basic and acidic residues. Coiled-coil stretches lie at residues Gln361–Leu415 and Asn454–Gln522. Residues Gln543–Ser563 form a disordered region.

As to quaternary structure, interacts with CCDC42, CFAP53, IFT88 and ODF2. Interacts with CCDC146. Interacts with TEKT3. Interacts with ubiquitinated histone H2A. Expressed exclusively in testis where it is detected mainly in spermatogonia and spermatocytes (at protein level).

The protein resides in the cytoplasm. It localises to the cytoskeleton. The protein localises to the microtubule organizing center. Its subcellular location is the centrosome. It is found in the perinuclear region. The protein resides in the cell projection. It localises to the cilium. The protein localises to the flagellum. Functionally, essential for male fertility. Required for sperm flagellum biogenesis. Also required for acrosome biogenesis. Required for the attachment of developing acrosomes to the nucleus during spermiogenesis and may be involved in the transport of fibrous sheath components. This Mus musculus (Mouse) protein is Coiled-coil domain-containing protein 38 (Ccdc38).